A 252-amino-acid chain; its full sequence is Methylthioribulose-1-phosphate dehydratase (252 aa).

Cys-105 serves as a coordination point for substrate. Positions 123 and 125 each coordinate Zn(2+). Catalysis depends on Glu-151, which acts as the Proton donor/acceptor. His-208 is a Zn(2+) binding site.

It belongs to the aldolase class II family. MtnB subfamily. It depends on Zn(2+) as a cofactor.

It is found in the cytoplasm. The enzyme catalyses 5-(methylsulfanyl)-D-ribulose 1-phosphate = 5-methylsulfanyl-2,3-dioxopentyl phosphate + H2O. The protein operates within amino-acid biosynthesis; L-methionine biosynthesis via salvage pathway; L-methionine from S-methyl-5-thio-alpha-D-ribose 1-phosphate: step 2/6. Its function is as follows. Catalyzes the dehydration of methylthioribulose-1-phosphate (MTRu-1-P) into 2,3-diketo-5-methylthiopentyl-1-phosphate (DK-MTP-1-P). The polypeptide is Methylthioribulose-1-phosphate dehydratase (Sclerotinia sclerotiorum (strain ATCC 18683 / 1980 / Ss-1) (White mold)).